The following is a 220-amino-acid chain: Ribonuclease HII (220 aa).

Residues 16 to 216 (PVFAGIDEAG…VRPNPAAEEQ (201 aa)) form the RNase H type-2 domain. 3 residues coordinate a divalent metal cation: D22, E23, and D114.

Belongs to the RNase HII family. The cofactor is Mn(2+). Mg(2+) is required as a cofactor.

It localises to the cytoplasm. The enzyme catalyses Endonucleolytic cleavage to 5'-phosphomonoester.. In terms of biological role, endonuclease that specifically degrades the RNA of RNA-DNA hybrids. The chain is Ribonuclease HII from Nitratidesulfovibrio vulgaris (strain ATCC 29579 / DSM 644 / CCUG 34227 / NCIMB 8303 / VKM B-1760 / Hildenborough) (Desulfovibrio vulgaris).